Consider the following 273-residue polypeptide: Undecaprenyl-diphosphatase (273 aa).

A run of 7 helical transmembrane segments spans residues Ala45 to Trp65, Leu90 to His110, Leu116 to Ala136, Tyr154 to Ser173, Tyr190 to Leu210, Ala222 to Ile242, and Ile252 to Phe272.

It belongs to the UppP family.

The protein resides in the cell inner membrane. It catalyses the reaction di-trans,octa-cis-undecaprenyl diphosphate + H2O = di-trans,octa-cis-undecaprenyl phosphate + phosphate + H(+). Functionally, catalyzes the dephosphorylation of undecaprenyl diphosphate (UPP). Confers resistance to bacitracin. The chain is Undecaprenyl-diphosphatase from Enterobacter sp. (strain 638).